Reading from the N-terminus, the 285-residue chain is Catechol-2,3-dioxygenase (285 aa).

2 VOC domains span residues 9 to 126 (HIGY…MYAD) and 169 to 285 (IIGH…TFVI). 2 residues coordinate Fe cation: His-213 and Glu-264.

Belongs to the extradiol ring-cleavage dioxygenase family. Fe(2+) serves as cofactor.

The enzyme catalyses catechol + O2 = (2Z,4E)-2-hydroxy-6-oxohexa-2,4-dienoate + H(+). Functionally, involved in the meta cleavage of catechol to 2-hydroxymuconic semialdehyde. Essential for growth and viability in the presence of catechol and probably involved in the detoxification of catechol. This is Catechol-2,3-dioxygenase (catE) from Bacillus subtilis (strain 168).